A 200-amino-acid polypeptide reads, in one-letter code: Holliday junction branch migration complex subunit RuvA (200 aa).

The tract at residues M1–F64 is domain I. The segment at K65–G143 is domain II. Positions G143–M147 are flexible linker. The domain III stretch occupies residues P148–S200.

Belongs to the RuvA family. In terms of assembly, homotetramer. Forms an RuvA(8)-RuvB(12)-Holliday junction (HJ) complex. HJ DNA is sandwiched between 2 RuvA tetramers; dsDNA enters through RuvA and exits via RuvB. An RuvB hexamer assembles on each DNA strand where it exits the tetramer. Each RuvB hexamer is contacted by two RuvA subunits (via domain III) on 2 adjacent RuvB subunits; this complex drives branch migration. In the full resolvosome a probable DNA-RuvA(4)-RuvB(12)-RuvC(2) complex forms which resolves the HJ.

It localises to the cytoplasm. The RuvA-RuvB-RuvC complex processes Holliday junction (HJ) DNA during genetic recombination and DNA repair, while the RuvA-RuvB complex plays an important role in the rescue of blocked DNA replication forks via replication fork reversal (RFR). RuvA specifically binds to HJ cruciform DNA, conferring on it an open structure. The RuvB hexamer acts as an ATP-dependent pump, pulling dsDNA into and through the RuvAB complex. HJ branch migration allows RuvC to scan DNA until it finds its consensus sequence, where it cleaves and resolves the cruciform DNA. This chain is Holliday junction branch migration complex subunit RuvA, found in Chlorobium phaeobacteroides (strain DSM 266 / SMG 266 / 2430).